The primary structure comprises 179 residues: Stress response regulator gls24 homolog (179 aa).

The segment at 147 to 179 is disordered; that stretch reads TSEFTSHQVENVKASVDNGVEKLQDQKAEPRVK. The span at 165-179 shows a compositional bias: basic and acidic residues; the sequence is GVEKLQDQKAEPRVK.

The protein belongs to the asp23 family.

The chain is Stress response regulator gls24 homolog from Streptococcus pyogenes serotype M28 (strain MGAS6180).